The chain runs to 198 residues: Recombination protein RecR (198 aa).

A C4-type zinc finger spans residues C57 to C72. One can recognise a Toprim domain in the interval S80–P175.

It belongs to the RecR family.

May play a role in DNA repair. It seems to be involved in an RecBC-independent recombinational process of DNA repair. It may act with RecF and RecO. The polypeptide is Recombination protein RecR (Halalkalibacterium halodurans (strain ATCC BAA-125 / DSM 18197 / FERM 7344 / JCM 9153 / C-125) (Bacillus halodurans)).